The primary structure comprises 1087 residues: Platelet-derived growth factor receptor alpha (1087 aa).

Positions 1–23 (MGTPPRTFLILGCFLTGPLLTLC) are cleaved as a signal peptide. The Extracellular portion of the chain corresponds to 24–528 (QLPLPTIVPN…PTLRSELTVA (505 aa)). 5 Ig-like C2-type domains span residues 26–104 (PLPT…YNHT), 116–208 (IYIY…IYIL), 213–312 (QLPV…VHDK), 314–411 (FIHL…SLLI), and 414–517 (PALI…LKLV). N-linked (GlcNAc...) asparagine glycans are attached at residues N44, N75, N88, and N102. Residues C49 and C99 are joined by a disulfide bond. Intrachain disulfides connect C149–C189 and C235–C290. N353, N359, N458, and N468 each carry an N-linked (GlcNAc...) asparagine glycan. Cysteines 435 and 501 form a disulfide. A helical membrane pass occupies residues 529–549 (AAVLVLLVIVIISLIVLVIIW). The Cytoplasmic portion of the chain corresponds to 550 to 1087 (KQKPRYEIRW…SSDLVEDSFL (538 aa)). Residues Y572 and Y574 each carry the phosphotyrosine; by autocatalysis modification. A Protein kinase domain is found at 593-954 (LVLGRILGSG…HLSEIVESLL (362 aa)). ATP is bound by residues 599–607 (LGSGAFGKV) and K627. Residues Y720, Y731, Y742, Y754, Y762, and Y768 each carry the phosphotyrosine; by autocatalysis modification. D818 functions as the Proton acceptor in the catalytic mechanism. Phosphotyrosine; by autocatalysis occurs at positions 849 and 988. Residues 1000–1011 (KDRESGFDEQRL) are compositionally biased toward basic and acidic residues. The tract at residues 1000–1059 (KDRESGFDEQRLSADSGYITPLPDIDPVSEDELGKRNRHSSQTSEESAIETGSSSSTFIK) is disordered. Y1017 carries the post-translational modification Phosphotyrosine; by autocatalysis. Positions 1039-1057 (SSQTSEESAIETGSSSSTF) are enriched in polar residues.

It belongs to the protein kinase superfamily. Tyr protein kinase family. CSF-1/PDGF receptor subfamily. Interacts with homodimeric PDGFA, PDGFB and PDGFC, and with heterodimers formed by PDGFA and PDGFB. Monomer in the absence of bound ligand. Interaction with dimeric PDGFA, PDGFB and/or PDGFC leads to receptor dimerization, where both PDGFRA homodimers and heterodimers with PDGFRB are observed. Post-translationally, ubiquitinated, leading to its internalization and degradation. In terms of processing, autophosphorylated on tyrosine residues upon ligand binding. Autophosphorylation occurs in trans, i.e. one subunit of the dimeric receptor phosphorylates tyrosine residues on the other subunit.

Its subcellular location is the cell membrane. It is found in the cell projection. The protein localises to the cilium. The protein resides in the golgi apparatus. The enzyme catalyses L-tyrosyl-[protein] + ATP = O-phospho-L-tyrosyl-[protein] + ADP + H(+). Present in an inactive conformation in the absence of bound ligand. Binding of PDGFA and/or PDGFB leads to dimerization and activation by autophosphorylation on tyrosine residues. Its function is as follows. Tyrosine-protein kinase that acts as a cell-surface receptor for PDGFA, PDGFB and PDGFC and plays an essential role in the regulation of embryonic development, cell proliferation, survival and chemotaxis. Depending on the context, promotes or inhibits cell proliferation and cell migration. Plays an important role in the differentiation of bone marrow-derived mesenchymal stem cells. Required for normal skeleton development. Required for normal development of the gastrointestinal tract. Plays a role in cell migration and chemotaxis in wound healing. Plays a role in platelet activation, secretion of agonists from platelet granules, and in thrombin-induced platelet aggregation. Binding of its cognate ligands - homodimeric PDGFA, homodimeric PDGFB, heterodimers formed by PDGFA and PDGFB or homodimeric PDGFC -leads to the activation of several signaling cascades; the response depends on the nature of the bound ligand and is modulated by the formation of heterodimers between PDGFRA and PDGFRB. Phosphorylates PIK3R1, PLCG1, and PTPN11. Activation of PLCG1 leads to the production of the cellular signaling molecules diacylglycerol and inositol 1,4,5-trisphosphate, mobilization of cytosolic Ca(2+) and the activation of protein kinase C. Phosphorylates PIK3R1, the regulatory subunit of phosphatidylinositol 3-kinase, and thereby mediates activation of the AKT1 signaling pathway. Mediates activation of HRAS and of the MAP kinases MAPK1/ERK2 and/or MAPK3/ERK1. Promotes activation of STAT family members STAT1, STAT3 and STAT5A and/or STAT5B. Receptor signaling is down-regulated by protein phosphatases that dephosphorylate the receptor and its down-stream effectors, and by rapid internalization of the activated receptor. The sequence is that of Platelet-derived growth factor receptor alpha (PDGFRA) from Gallus gallus (Chicken).